A 122-amino-acid chain; its full sequence is Large ribosomal subunit protein uL14 (122 aa).

This sequence belongs to the universal ribosomal protein uL14 family. In terms of assembly, part of the 50S ribosomal subunit. Forms a cluster with proteins L3 and L19. In the 70S ribosome, L14 and L19 interact and together make contacts with the 16S rRNA in bridges B5 and B8.

Its function is as follows. Binds to 23S rRNA. Forms part of two intersubunit bridges in the 70S ribosome. In Teredinibacter turnerae (strain ATCC 39867 / T7901), this protein is Large ribosomal subunit protein uL14.